A 302-amino-acid chain; its full sequence is uncharacterized protein (302 aa).

This is an uncharacterized protein from Ictaluridae (bullhead catfishes).